The primary structure comprises 587 residues: 2-succinyl-5-enolpyruvyl-6-hydroxy-3-cyclohexene-1-carboxylate synthase (587 aa).

It belongs to the TPP enzyme family. MenD subfamily. In terms of assembly, homodimer. Mg(2+) is required as a cofactor. The cofactor is Mn(2+). Thiamine diphosphate serves as cofactor.

It carries out the reaction isochorismate + 2-oxoglutarate + H(+) = 5-enolpyruvoyl-6-hydroxy-2-succinyl-cyclohex-3-ene-1-carboxylate + CO2. It participates in quinol/quinone metabolism; 1,4-dihydroxy-2-naphthoate biosynthesis; 1,4-dihydroxy-2-naphthoate from chorismate: step 2/7. Its pathway is quinol/quinone metabolism; menaquinone biosynthesis. Catalyzes the thiamine diphosphate-dependent decarboxylation of 2-oxoglutarate and the subsequent addition of the resulting succinic semialdehyde-thiamine pyrophosphate anion to isochorismate to yield 2-succinyl-5-enolpyruvyl-6-hydroxy-3-cyclohexene-1-carboxylate (SEPHCHC). The protein is 2-succinyl-5-enolpyruvyl-6-hydroxy-3-cyclohexene-1-carboxylate synthase of Chloroflexus aurantiacus (strain ATCC 29366 / DSM 635 / J-10-fl).